A 331-amino-acid chain; its full sequence is NADH-quinone oxidoreductase subunit H (331 aa).

8 helical membrane-spanning segments follow: residues 13–33 (FLIS…VLTL), 80–100 (WVFL…WLVI), 113–133 (IGLV…IMAG), 159–179 (LILS…VDIV), 183–203 (AGGF…AFFV), 249–269 (VMSA…LPFL), 273–293 (VFNW…FQWI), and 311–331 (KILV…MLVI).

It belongs to the complex I subunit 1 family. As to quaternary structure, NDH-1 is composed of 14 different subunits. Subunits NuoA, H, J, K, L, M, N constitute the membrane sector of the complex.

The protein resides in the cell membrane. The catalysed reaction is a quinone + NADH + 5 H(+)(in) = a quinol + NAD(+) + 4 H(+)(out). In terms of biological role, NDH-1 shuttles electrons from NADH, via FMN and iron-sulfur (Fe-S) centers, to quinones in the respiratory chain. The immediate electron acceptor for the enzyme in this species is believed to be ubiquinone. Couples the redox reaction to proton translocation (for every two electrons transferred, four hydrogen ions are translocated across the cytoplasmic membrane), and thus conserves the redox energy in a proton gradient. This subunit may bind ubiquinone. The polypeptide is NADH-quinone oxidoreductase subunit H (Rubrobacter xylanophilus (strain DSM 9941 / JCM 11954 / NBRC 16129 / PRD-1)).